A 487-amino-acid chain; its full sequence is Probable UDP-N-acetylglucosamine pyrophosphorylase (487 aa).

The Substrate binding signature appears at 105-108; the sequence is LAGG. UTP contacts are provided by residues 105 to 108, Lys119, Gln198, and Gly225; that span reads LAGG. Asn226 is a substrate binding site. Asp256 is a binding site for UTP. Positions 307–308 match the Substrate binding motif; that stretch reads EY. Lys382 lines the UTP pocket. Position 412 (Lys412) interacts with substrate.

It belongs to the UDPGP type 1 family.

Its subcellular location is the cytoplasm. It carries out the reaction N-acetyl-alpha-D-glucosamine 1-phosphate + UTP + H(+) = UDP-N-acetyl-alpha-D-glucosamine + diphosphate. The protein operates within nucleotide-sugar biosynthesis; UDP-N-acetyl-alpha-D-glucosamine biosynthesis; UDP-N-acetyl-alpha-D-glucosamine from N-acetyl-alpha-D-glucosamine 1-phosphate: step 1/1. The protein is Probable UDP-N-acetylglucosamine pyrophosphorylase (uap1) of Dictyostelium discoideum (Social amoeba).